A 266-amino-acid polypeptide reads, in one-letter code: MPRRAFRVAYDGRPYHGFQRQPDVSTVAGELFGALRRLDVFDGAKPPGYAAAGRTDAGVSARAQTVAFDAPAWLTPDAFTGALPDPIQVWAHADAPPEFHATHDAVARTYVYYWYAPDSRATDDRAAGALDRLTGTHDFHNLTPNTTNTVRELDATLDRDGAFRVITVRAGGFCRELVRRVVSLVQLVTETGDTDRIDTVLGDEPVAGPDGVPPADPHPLVLHAVAYDGLSFTVDEDAAERARTTFRAARADHHERARVAGHLASI.

The active-site Nucleophile is the aspartate 56. Tyrosine 110 lines the substrate pocket.

Belongs to the tRNA pseudouridine synthase TruA family.

The catalysed reaction is uridine(38/39/40) in tRNA = pseudouridine(38/39/40) in tRNA. Formation of pseudouridine at positions 38, 39 and 40 in the anticodon stem and loop of transfer RNAs. The chain is tRNA pseudouridine synthase A from Halobacterium salinarum (strain ATCC 29341 / DSM 671 / R1).